We begin with the raw amino-acid sequence, 147 residues long: Deoxyuridine 5'-triphosphate nucleotidohydrolase (147 aa).

Substrate-binding positions include 67–69, Asn80, and 84–86; these read RSG and LID.

It belongs to the dUTPase family. Mg(2+) is required as a cofactor.

It catalyses the reaction dUTP + H2O = dUMP + diphosphate + H(+). The protein operates within pyrimidine metabolism; dUMP biosynthesis; dUMP from dCTP (dUTP route): step 2/2. In terms of biological role, this enzyme is involved in nucleotide metabolism: it produces dUMP, the immediate precursor of thymidine nucleotides and it decreases the intracellular concentration of dUTP so that uracil cannot be incorporated into DNA. The polypeptide is Deoxyuridine 5'-triphosphate nucleotidohydrolase (Gloeobacter violaceus (strain ATCC 29082 / PCC 7421)).